A 421-amino-acid polypeptide reads, in one-letter code: Glutamyl-tRNA reductase (421 aa).

Substrate is bound by residues 49–52, S109, 114–116, and Q120; these read TCNR and EPQ. Catalysis depends on C50, which acts as the Nucleophile. 189–194 provides a ligand contact to NADP(+); the sequence is GLGQIG.

Belongs to the glutamyl-tRNA reductase family. Homodimer.

The catalysed reaction is (S)-4-amino-5-oxopentanoate + tRNA(Glu) + NADP(+) = L-glutamyl-tRNA(Glu) + NADPH + H(+). The protein operates within porphyrin-containing compound metabolism; protoporphyrin-IX biosynthesis; 5-aminolevulinate from L-glutamyl-tRNA(Glu): step 1/2. Its function is as follows. Catalyzes the NADPH-dependent reduction of glutamyl-tRNA(Glu) to glutamate 1-semialdehyde (GSA). The polypeptide is Glutamyl-tRNA reductase (Limosilactobacillus reuteri (strain DSM 20016) (Lactobacillus reuteri)).